A 584-amino-acid chain; its full sequence is Arginine--tRNA ligase (584 aa).

Residues 127-137 carry the 'HIGH' region motif; it reads PNLAKEMHVGH.

Belongs to the class-I aminoacyl-tRNA synthetase family. In terms of assembly, monomer.

The protein resides in the cytoplasm. It carries out the reaction tRNA(Arg) + L-arginine + ATP = L-arginyl-tRNA(Arg) + AMP + diphosphate. The chain is Arginine--tRNA ligase from Alcanivorax borkumensis (strain ATCC 700651 / DSM 11573 / NCIMB 13689 / SK2).